A 314-amino-acid polypeptide reads, in one-letter code: MDVSIIGASGKIGSVLSLLLAKESHIKNINLIARSSSINKLKGLKMDLYDAMAAAGQDTDIDICCDDDLSCTANSDITIITAGMARTGEMSRIDLMKGNAKIVKNYVKNIANFGDTKIFMISNPVDLMTYKALIESGYEKNQVFGLGTHLDSMRFKVAVAKHFEVHLDDVRTRIVGEHGDSMVPVISATAVGGIPIKRLPKYEDFPYEKILERIKGYGQEIINLKNGSEYGPASAIVNIVRCIAHDEKRLLTLSTYIEDEIEGIEGGCCIGVPVKVGKNGIEEVIHIKMEDDEIEGFKKSFELVKGYCRQIESI.

Residue 7–13 (GASGKIG) coordinates NADP(+). R86 and R92 together coordinate substrate. NADP(+)-binding positions include N99 and 121–123 (ISN). Residues N123 and R154 each coordinate substrate. H178 acts as the Proton acceptor in catalysis.

This sequence belongs to the LDH/MDH superfamily.

The catalysed reaction is (S)-malate + NADP(+) = oxaloacetate + NADPH + H(+). It catalyses the reaction (S)-malate + NAD(+) = oxaloacetate + NADH + H(+). Its function is as follows. Catalyzes the reversible oxidation of malate to oxaloacetate. The protein is Malate dehydrogenase (mdh) of Methanococcus maripaludis (strain DSM 14266 / JCM 13030 / NBRC 101832 / S2 / LL).